A 132-amino-acid chain; its full sequence is VPASDQLTVHVLPARHFSGRGLKRNQTLWASFLFVTPQQKIYYSGDSGYGPHFKAIGDEFGPVDLAIMENGQYDQDWKYIHMMPDETAQAADDLRARAVLPGHAGRSFWRNTAGMNRINGWRLPAKEGPGVC.

This sequence to M.tuberculosis Rv0906.

The protein resides in the cell outer membrane. The protein is Outer membrane protein RomA (romA) of Klebsiella pneumoniae.